The chain runs to 254 residues: 3-deoxy-manno-octulosonate cytidylyltransferase (254 aa).

The protein belongs to the KdsB family.

It is found in the cytoplasm. The enzyme catalyses 3-deoxy-alpha-D-manno-oct-2-ulosonate + CTP = CMP-3-deoxy-beta-D-manno-octulosonate + diphosphate. It participates in nucleotide-sugar biosynthesis; CMP-3-deoxy-D-manno-octulosonate biosynthesis; CMP-3-deoxy-D-manno-octulosonate from 3-deoxy-D-manno-octulosonate and CTP: step 1/1. Its pathway is bacterial outer membrane biogenesis; lipopolysaccharide biosynthesis. In terms of biological role, activates KDO (a required 8-carbon sugar) for incorporation into bacterial lipopolysaccharide in Gram-negative bacteria. In Pseudomonas fluorescens (strain SBW25), this protein is 3-deoxy-manno-octulosonate cytidylyltransferase.